An 842-amino-acid polypeptide reads, in one-letter code: Glycogen phosphorylase, muscle form (842 aa).

Position 2 is an N-acetylserine (S2). S15 bears the Phosphoserine; by PHK; in form phosphorylase A mark. D43 and Y76 together coordinate AMP. 2 positions are modified to phosphotyrosine: Y204 and Y227. Residue 310 to 319 coordinates AMP; the sequence is RRFKSSKFGC. Phosphoserine is present on S430. Phosphotyrosine is present on Y473. S514 carries the phosphoserine modification. An N6-(pyridoxal phosphate)lysine modification is found at K681. S747 and S748 each carry phosphoserine.

It belongs to the glycogen phosphorylase family. In terms of assembly, homodimer. Homotetramer; to form the enzymatically active phosphorylase A. The cofactor is pyridoxal 5'-phosphate. Phosphorylation of Ser-15 converts phosphorylase B (unphosphorylated) to phosphorylase A.

The enzyme catalyses [(1-&gt;4)-alpha-D-glucosyl](n) + phosphate = [(1-&gt;4)-alpha-D-glucosyl](n-1) + alpha-D-glucose 1-phosphate. Allosterically regulated through the non-covalent binding of metabolites, being activated by AMP and inhibited by ATP, ADP, and glucose-6-phosphate. The activity is also controlled by post-translational modifications including phosphorylation. Functionally, allosteric enzyme that catalyzes the rate-limiting step in glycogen catabolism, the phosphorolytic cleavage of glycogen to produce glucose-1-phosphate, and plays a central role in maintaining cellular and organismal glucose homeostasis. The polypeptide is Glycogen phosphorylase, muscle form (Macaca fascicularis (Crab-eating macaque)).